The following is a 227-amino-acid chain: Killer cell lectin-like receptor subfamily B member 1A (227 aa).

At 1 to 45 the chain is on the cytoplasmic side; that stretch reads MDTARVYFGLKPPRTPGAWHESPPSLPPDACRCPRSHRLALKLSC. Residues 31–34 carry the LCK-binding motif motif; sequence CRCP. The chain crosses the membrane as a helical; Signal-anchor for type II membrane protein span at residues 46–66; that stretch reads AGLILLVVTLIGMSVLVRVLI. Residues 67–227 are Extracellular-facing; the sequence is QKPSIEKCYV…TLSNYVGYGH (161 aa). The region spanning 93–212 is the C-type lectin domain; that stretch reads ECPQDWLSHR…NSDNRWICQK (120 aa). 3 cysteine pairs are disulfide-bonded: cysteine 94/cysteine 105, cysteine 122/cysteine 210, and cysteine 189/cysteine 202.

Homodimer; disulfide-linked. Interacts with tyrosine kinase LCK. Expressed in natural killer cells.

It is found in the membrane. In terms of biological role, plays a stimulatory role on natural killer (NK) cell cytotoxicity. In Mus musculus (Mouse), this protein is Killer cell lectin-like receptor subfamily B member 1A (Klrb1a).